Here is a 160-residue protein sequence, read N- to C-terminus: Major strawberry allergen Fra a 1-2 (160 aa).

It belongs to the BetVI family. In terms of assembly, monomer. Interacts with AP. Highly expressed in ripe red fruits. Expressed in roots and white fruits. Expressed at low levels in open flowers.

Functionally, involved in the control of flavonoid biosynthesis in fruits, probably by binding directly to natural flavonoids. Binds the natural flavonoid myricetin with affinities in the low micromolar range. This is Major strawberry allergen Fra a 1-2 from Fragaria ananassa (Strawberry).